Consider the following 1111-residue polypeptide: Atrial natriuretic peptide-converting enzyme (1111 aa).

Topologically, residues Met1–Arg112 are cytoplasmic. A DDNN motif motif is present at residues Ala93–Ser96. A helical; Signal-anchor for type II membrane protein transmembrane segment spans residues Phe113–Leu133. Topologically, residues Ser134–Gly1111 are extracellular. Asn147 carries an N-linked (GlcNAc...) asparagine glycan. The FZ 1 domain maps to Gly199–Leu325. 31 cysteine pairs are disulfide-bonded: Cys204-Cys264, Cys212-Cys257, Cys248-Cys288, Cys277-Cys322, Cys281-Cys305, Cys335-Cys348, Cys343-Cys361, Cys355-Cys370, Cys372-Cys384, Cys379-Cys397, Cys391-Cys406, Cys408-Cys421, Cys416-Cys434, Cys428-Cys443, Cys445-Cys458, Cys453-Cys471, Cys465-Cys480, Cys521-Cys584, Cys529-Cys577, Cys568-Cys606, Cys595-Cys636, Cys599-Cys623, Cys646-Cys658, Cys653-Cys671, Cys665-Cys680, Cys682-Cys696, Cys690-Cys709, Cys703-Cys718, Cys721-Cys733, Cys728-Cys746, and Cys740-Cys755. Asn296 is a glycosylation site (N-linked (GlcNAc...) asparagine). LDL-receptor class A domains follow at residues Leu334–Asn371, Asn371–Asp407, Asp407–Ser444, and Ser444–Ser481. Residue Asn409 is glycosylated (N-linked (GlcNAc...) asparagine). Positions Ser516–Pro639 constitute an FZ 2 domain. Residue Asn535 is glycosylated (N-linked (GlcNAc...) asparagine). 3 LDL-receptor class A domains span residues Glu645 to Gly681, Gly681 to Ser719, and Phe720 to Val756. The SRCR domain occupies Val756–Thr851. Asn763 carries N-linked (GlcNAc...) asparagine glycosylation. Disulfide bonds link Cys855-Cys977, Cys893-Cys909, Cys991-Cys1056, and Cys1020-Cys1035. The Peptidase S1 domain maps to Ile867–Tyr1100. Active-site charge relay system residues include His908 and Asp957. The Charge relay system role is filled by Ser1050.

It belongs to the peptidase S1 family. Post-translationally, N-glycosylated; required for processing and activation. In terms of processing, activated through proteolytic processing by a trypsin-like protease; cleaved into a N-terminal propeptide and an activated corin protease fragment. Atrial natriuretic peptide-converting enzyme, 180 kDa soluble fragment is produced by cleavage by ADAM10. Cleavage by ADAM10 to produce soluble 180 kDa soluble fragment takes place after the transmembrane region and before FZ 1. A disulfide bond links the activated corin protease fragment and the N-terminal propeptide. The disulfide bond also links the activated corin protease fragment with Atrial natriuretic peptide-converting enzyme, 180 kDa soluble fragment. Specifically expressed in heart. Also detected in kidney, aorta, brain and testis. In kidney, present in epithelial cells, with segmental expression in the proximal tubule, thick ascending limb, connecting tubule, and throughout the collecting duct (at protein level).

The protein resides in the cell membrane. It is found in the cytoplasmic vesicle. The protein localises to the secreted. Functionally, serine-type endopeptidase involved in atrial natriuretic peptide (NPPA) processing. Converts through proteolytic cleavage the non-functional propeptide NPPA into the active hormone, thereby regulating blood pressure in heart and promoting natriuresis, diuresis and vasodilation. Proteolytic cleavage of pro-NPPA also plays a role in female pregnancy by promoting trophoblast invasion and spiral artery remodeling in uterus. Also acts as a regulator of sodium reabsorption in kidney. May also process pro-NPPB the B-type natriuretic peptide. The sequence is that of Atrial natriuretic peptide-converting enzyme (Corin) from Rattus norvegicus (Rat).